Reading from the N-terminus, the 421-residue chain is Hemagglutinin-esterase (421 aa).

The N-terminal stretch at 1–16 (MFLLPRFILVSCIIGS) is a signal peptide. Positions 7–127 (FILVSCIIGS…SNDIWMQNKG (121 aa)) are esterase domain 1. Residues 17–392 (LGFDNPPTNV…PICVYDPLPL (376 aa)) lie on the Virion surface side of the membrane. S40 (nucleophile) is an active-site residue. Residues C44 and C65 are joined by a disulfide bond. Residues N54, N89, N153, N236, and N301 are each glycosylated (N-linked (GlcNAc...) asparagine; by host). 3 disulfides stabilise this stretch: C113-C162, C197-C276, and C205-C249. The receptor binding stretch occupies residues 128–266 (LFYTQVYKNM…GNYLAISNEL (139 aa)). The segment at 267–379 (LLTVPTKAIC…RCPTAADINT (113 aa)) is esterase domain 2. An intrachain disulfide couples C307 to C312. Residue N316 is glycosylated (N-linked (GlcNAc...) asparagine; by host). Catalysis depends on charge relay system residues D326 and H329. A disulfide bridge links C347 with C371. N-linked (GlcNAc...) asparagine; by host glycosylation is present at N358. A helical transmembrane segment spans residues 393-413 (ILLGILLGVAVIIIVVLLLYF). Topologically, residues 414 to 421 (MVENGTRL) are intravirion. An N-linked (GlcNAc...) asparagine; by host glycan is attached at N417.

This sequence belongs to the influenza type C/coronaviruses hemagglutinin-esterase family. As to quaternary structure, homodimer; disulfide-linked. Forms a complex with the M protein in the pre-Golgi. Associates then with S-M complex to form a ternary complex S-M-HE. In terms of processing, N-glycosylated in the host RER.

It localises to the virion membrane. It is found in the host cell membrane. The enzyme catalyses N-acetyl-9-O-acetylneuraminate + H2O = N-acetylneuraminate + acetate + H(+). It carries out the reaction N-acetyl-4-O-acetylneuraminate + H2O = N-acetylneuraminate + acetate + H(+). In terms of biological role, structural protein that makes short spikes at the surface of the virus. Contains receptor binding and receptor-destroying activities. Mediates de-O-acetylation of N-acetyl-4-O-acetylneuraminic acid, which is probably the receptor determinant recognized by the virus on the surface of erythrocytes and susceptible cells. This receptor-destroying activity is important for virus release as it probably helps preventing self-aggregation and ensures the efficient spread of the progeny virus from cell to cell. May serve as a secondary viral attachment protein for initiating infection, the spike protein being the major one. May become a target for both the humoral and the cellular branches of the immune system. The protein is Hemagglutinin-esterase of Bos taurus (Bovine).